A 428-amino-acid polypeptide reads, in one-letter code: Enolase (428 aa).

Gln173 provides a ligand contact to (2R)-2-phosphoglycerate. The Proton donor role is filled by Glu217. The Mg(2+) site is built by Asp253, Glu294, and Asp320. The (2R)-2-phosphoglycerate site is built by Lys345, Arg374, Ser375, and Lys396. Lys345 functions as the Proton acceptor in the catalytic mechanism.

Belongs to the enolase family. It depends on Mg(2+) as a cofactor.

It is found in the cytoplasm. The protein localises to the secreted. The protein resides in the cell surface. It carries out the reaction (2R)-2-phosphoglycerate = phosphoenolpyruvate + H2O. The protein operates within carbohydrate degradation; glycolysis; pyruvate from D-glyceraldehyde 3-phosphate: step 4/5. Functionally, catalyzes the reversible conversion of 2-phosphoglycerate (2-PG) into phosphoenolpyruvate (PEP). It is essential for the degradation of carbohydrates via glycolysis. This chain is Enolase, found in Methanosarcina mazei (strain ATCC BAA-159 / DSM 3647 / Goe1 / Go1 / JCM 11833 / OCM 88) (Methanosarcina frisia).